The primary structure comprises 164 residues: Ribosome-binding factor A (164 aa).

It belongs to the RbfA family. As to quaternary structure, monomer. Binds 30S ribosomal subunits, but not 50S ribosomal subunits or 70S ribosomes.

The protein localises to the cytoplasm. One of several proteins that assist in the late maturation steps of the functional core of the 30S ribosomal subunit. Associates with free 30S ribosomal subunits (but not with 30S subunits that are part of 70S ribosomes or polysomes). Required for efficient processing of 16S rRNA. May interact with the 5'-terminal helix region of 16S rRNA. The protein is Ribosome-binding factor A of Mycobacterium leprae (strain Br4923).